The sequence spans 645 residues: Threonine--tRNA ligase (645 aa).

A TGS domain is found at 1–62 (MSIHITFPDG…VEDGSLEIVT (62 aa)). Positions 242 to 541 (DHRKLGKELD…LTEVYKGAFP (300 aa)) are catalytic. Cysteine 336, histidine 387, and histidine 518 together coordinate Zn(2+).

This sequence belongs to the class-II aminoacyl-tRNA synthetase family. As to quaternary structure, homodimer. It depends on Zn(2+) as a cofactor.

The protein localises to the cytoplasm. It carries out the reaction tRNA(Thr) + L-threonine + ATP = L-threonyl-tRNA(Thr) + AMP + diphosphate + H(+). Catalyzes the attachment of threonine to tRNA(Thr) in a two-step reaction: L-threonine is first activated by ATP to form Thr-AMP and then transferred to the acceptor end of tRNA(Thr). Also edits incorrectly charged L-seryl-tRNA(Thr). This chain is Threonine--tRNA ligase, found in Enterococcus faecalis (strain ATCC 700802 / V583).